The primary structure comprises 528 residues: Importin subunit alpha-2 (528 aa).

The span at methionine 1–proline 15 shows a compositional bias: low complexity. Positions methionine 1–arginine 36 are disordered. ARM repeat units lie at residues valine 125–alanine 165, glutamate 167–glycine 206, alanine 209–lysine 248, lysine 253–alanine 292, serine 294–alanine 335, aspartate 338–alanine 383, phenylalanine 386–valine 425, and valine 438–arginine 477.

It belongs to the importin alpha family. As to quaternary structure, forms a complex with importin subunit beta-1. The whole complex, most stable and composed of importin alpha, importin beta and NLS substrate, is referred to as PTAC or pore targeting complex. In terms of tissue distribution, expressed in root, callus, and etiolated leaf. Low expression in green leaf.

Its subcellular location is the cytoplasm. It is found in the perinuclear region. In terms of biological role, binds specifically and directly to substrates containing either a simple or bipartite NLS motif. Promotes docking of import substrates to the nuclear envelope. This Oryza sativa subsp. japonica (Rice) protein is Importin subunit alpha-2.